Here is a 351-residue protein sequence, read N- to C-terminus: UDP-3-O-acylglucosamine N-acyltransferase (351 aa).

The Proton acceptor role is filled by H239.

It belongs to the transferase hexapeptide repeat family. LpxD subfamily. As to quaternary structure, homotrimer.

The catalysed reaction is a UDP-3-O-[(3R)-3-hydroxyacyl]-alpha-D-glucosamine + a (3R)-hydroxyacyl-[ACP] = a UDP-2-N,3-O-bis[(3R)-3-hydroxyacyl]-alpha-D-glucosamine + holo-[ACP] + H(+). It participates in bacterial outer membrane biogenesis; LPS lipid A biosynthesis. Its function is as follows. Catalyzes the N-acylation of UDP-3-O-acylglucosamine using 3-hydroxyacyl-ACP as the acyl donor. Is involved in the biosynthesis of lipid A, a phosphorylated glycolipid that anchors the lipopolysaccharide to the outer membrane of the cell. In Vibrio cholerae serotype O1 (strain ATCC 39315 / El Tor Inaba N16961), this protein is UDP-3-O-acylglucosamine N-acyltransferase.